Here is a 122-residue protein sequence, read N- to C-terminus: Acidic phospholipase A2 A' (122 aa).

7 cysteine pairs are disulfide-bonded: Cys-26–Cys-115, Cys-28–Cys-44, Cys-43–Cys-95, Cys-49–Cys-122, Cys-50–Cys-88, Cys-57–Cys-81, and Cys-75–Cys-86. Tyr-27, Gly-29, and Gly-31 together coordinate Ca(2+). Residue His-47 is part of the active site. Asp-48 lines the Ca(2+) pocket. Residue Asp-89 is part of the active site.

This sequence belongs to the phospholipase A2 family. Group II subfamily. D49 sub-subfamily. Ca(2+) is required as a cofactor. Expressed by the venom gland.

Its subcellular location is the secreted. It carries out the reaction a 1,2-diacyl-sn-glycero-3-phosphocholine + H2O = a 1-acyl-sn-glycero-3-phosphocholine + a fatty acid + H(+). PLA2 catalyzes the calcium-dependent hydrolysis of the 2-acyl groups in 3-sn-phosphoglycerides. The protein is Acidic phospholipase A2 A' of Gloydius halys (Chinese water mocassin).